The primary structure comprises 133 residues: Large ribosomal subunit protein bL17 (133 aa).

Belongs to the bacterial ribosomal protein bL17 family. Part of the 50S ribosomal subunit. Contacts protein L32.

The sequence is that of Large ribosomal subunit protein bL17 from Nitratidesulfovibrio vulgaris (strain ATCC 29579 / DSM 644 / CCUG 34227 / NCIMB 8303 / VKM B-1760 / Hildenborough) (Desulfovibrio vulgaris).